We begin with the raw amino-acid sequence, 208 residues long: MVKVEFAGDVKNLTSYIEKDAKAKIDSVVEEAVKEAEKLLNEKKEELLERAVVDVEKLLSDAQARLSAEKSSIDMEVRRKVEERKKELFQKVVEEAWKRALEEAEKKTERYKKFLEKVLIAMSNEAGEDEVIAYVRADDLEDVRAMVQEKGLKNVVEVKDVKEVGREIKGGVLGKSKSGGVWYNYTLEKAFDELLREVYPKVLEALGF.

The protein belongs to the V-ATPase E subunit family. As to quaternary structure, has multiple subunits with at least A(3), B(3), C, D, E, F, H, I and proteolipid K(x).

The protein resides in the cell membrane. In terms of biological role, component of the A-type ATP synthase that produces ATP from ADP in the presence of a proton gradient across the membrane. The polypeptide is A-type ATP synthase subunit E (Ignicoccus hospitalis (strain KIN4/I / DSM 18386 / JCM 14125)).